The sequence spans 607 residues: uncharacterized protein (607 aa).

Disordered stretches follow at residues 28 to 114 (GAER…KLRR) and 142 to 188 (DQER…NNSS). Over residues 35–50 (SSHGSINSRSASPNKA) the composition is skewed to polar residues. Composition is skewed to basic and acidic residues over residues 90-102 (VNGE…DHDT) and 161-174 (KENK…KDLS). The span at 177–188 (SSSSMKKANNSS) shows a compositional bias: low complexity. PHD-type zinc fingers lie at residues 263–312 (NDYC…CKHH) and 406–459 (PILC…HSDH).

This is an uncharacterized protein from Schizosaccharomyces pombe (strain 972 / ATCC 24843) (Fission yeast).